The sequence spans 57 residues: MALTCTDIPKFICAVLLPPIGVFLEKGCDYHLAICILLTILGYIPGIIYACYVILAY.

A run of 2 helical transmembrane segments spans residues 4–24 (TCTD…GVFL) and 36–56 (ILLT…VILA).

This sequence belongs to the UPF0057 (PMP3) family.

The protein localises to the membrane. The sequence is that of UPF0057 membrane protein T23F2.3 from Caenorhabditis elegans.